A 184-amino-acid polypeptide reads, in one-letter code: NADH-quinone oxidoreductase subunit B (184 aa).

Positions 63, 64, 128, and 158 each coordinate [4Fe-4S] cluster.

It belongs to the complex I 20 kDa subunit family. In terms of assembly, NDH-1 is composed of 14 different subunits. Subunits NuoB, C, D, E, F, and G constitute the peripheral sector of the complex. [4Fe-4S] cluster is required as a cofactor.

The protein resides in the cell inner membrane. The enzyme catalyses a quinone + NADH + 5 H(+)(in) = a quinol + NAD(+) + 4 H(+)(out). In terms of biological role, NDH-1 shuttles electrons from NADH, via FMN and iron-sulfur (Fe-S) centers, to quinones in the respiratory chain. The immediate electron acceptor for the enzyme in this species is believed to be ubiquinone. Couples the redox reaction to proton translocation (for every two electrons transferred, four hydrogen ions are translocated across the cytoplasmic membrane), and thus conserves the redox energy in a proton gradient. The polypeptide is NADH-quinone oxidoreductase subunit B (Xanthomonas oryzae pv. oryzae (strain MAFF 311018)).